The primary structure comprises 20 residues: M-poneritoxin-Ng1f (20 aa).

The residue at position 20 (Lys-20) is a Lysine amide.

In terms of tissue distribution, expressed by the venom gland.

It is found in the secreted. The protein resides in the target cell membrane. Functionally, has activity against Gram-positive bacteria. Has insecticidal and hemolytic activities. May act by disrupting the integrity of the bacterial cell membrane. The polypeptide is M-poneritoxin-Ng1f (Neoponera goeldii (Ponerine ant)).